A 218-amino-acid chain; its full sequence is Ribose-5-phosphate isomerase A (218 aa).

Substrate is bound by residues 27–30 (TGST), 80–83 (DGAD), and 93–96 (KGGG). E102 (proton acceptor) is an active-site residue. K120 lines the substrate pocket.

It belongs to the ribose 5-phosphate isomerase family. In terms of assembly, homodimer.

It carries out the reaction aldehydo-D-ribose 5-phosphate = D-ribulose 5-phosphate. It participates in carbohydrate degradation; pentose phosphate pathway; D-ribose 5-phosphate from D-ribulose 5-phosphate (non-oxidative stage): step 1/1. Catalyzes the reversible conversion of ribose-5-phosphate to ribulose 5-phosphate. The sequence is that of Ribose-5-phosphate isomerase A from Picrophilus torridus (strain ATCC 700027 / DSM 9790 / JCM 10055 / NBRC 100828 / KAW 2/3).